The primary structure comprises 173 residues: Large ribosomal subunit protein uL10 (173 aa).

Belongs to the universal ribosomal protein uL10 family. In terms of assembly, part of the ribosomal stalk of the 50S ribosomal subunit. The N-terminus interacts with L11 and the large rRNA to form the base of the stalk. The C-terminus forms an elongated spine to which L12 dimers bind in a sequential fashion forming a multimeric L10(L12)X complex.

Functionally, forms part of the ribosomal stalk, playing a central role in the interaction of the ribosome with GTP-bound translation factors. This chain is Large ribosomal subunit protein uL10 (rplJ), found in Synechocystis sp. (strain ATCC 27184 / PCC 6803 / Kazusa).